We begin with the raw amino-acid sequence, 91 residues long: Small ribosomal subunit protein bS20 (91 aa).

The protein belongs to the bacterial ribosomal protein bS20 family.

In terms of biological role, binds directly to 16S ribosomal RNA. This Mycoplasma mobile (strain ATCC 43663 / 163K / NCTC 11711) (Mesomycoplasma mobile) protein is Small ribosomal subunit protein bS20.